We begin with the raw amino-acid sequence, 167 residues long: Small ribosomal subunit protein uS3m (167 aa).

A mitochondrion-targeting transit peptide spans 1–35 (MVALYCGGGLRPLMLSWSRDLPCIWRALHTSAVCF).

It belongs to the universal ribosomal protein uS3 family. In terms of assembly, component of the mitochondrial ribosome small subunit (28S) which comprises a 12S rRNA and about 30 distinct proteins.

It localises to the mitochondrion. The sequence is that of Small ribosomal subunit protein uS3m (MRPS24) from Bos taurus (Bovine).